A 557-amino-acid chain; its full sequence is Dihydroxy-acid dehydratase (557 aa).

[2Fe-2S] cluster is bound at residue Cys-49. A Mg(2+)-binding site is contributed by Asp-81. Cys-122 is a [2Fe-2S] cluster binding site. Asp-123 and Lys-124 together coordinate Mg(2+). Lys-124 carries the post-translational modification N6-carboxylysine. Cys-194 is a binding site for [2Fe-2S] cluster. Residue Glu-446 coordinates Mg(2+). Catalysis depends on Ser-472, which acts as the Proton acceptor.

This sequence belongs to the IlvD/Edd family. Homodimer. [2Fe-2S] cluster serves as cofactor. It depends on Mg(2+) as a cofactor.

It carries out the reaction (2R)-2,3-dihydroxy-3-methylbutanoate = 3-methyl-2-oxobutanoate + H2O. The enzyme catalyses (2R,3R)-2,3-dihydroxy-3-methylpentanoate = (S)-3-methyl-2-oxopentanoate + H2O. It participates in amino-acid biosynthesis; L-isoleucine biosynthesis; L-isoleucine from 2-oxobutanoate: step 3/4. It functions in the pathway amino-acid biosynthesis; L-valine biosynthesis; L-valine from pyruvate: step 3/4. Its function is as follows. Functions in the biosynthesis of branched-chain amino acids. Catalyzes the dehydration of (2R,3R)-2,3-dihydroxy-3-methylpentanoate (2,3-dihydroxy-3-methylvalerate) into 2-oxo-3-methylpentanoate (2-oxo-3-methylvalerate) and of (2R)-2,3-dihydroxy-3-methylbutanoate (2,3-dihydroxyisovalerate) into 2-oxo-3-methylbutanoate (2-oxoisovalerate), the penultimate precursor to L-isoleucine and L-valine, respectively. This is Dihydroxy-acid dehydratase from Prochlorococcus marinus (strain MIT 9215).